We begin with the raw amino-acid sequence, 125 residues long: Small ribosomal subunit protein uS13 (125 aa).

The interval 92–125 (RRHLPVHGQRTKTNARTRKGPKKTVAGKKKAGKK) is disordered.

The protein belongs to the universal ribosomal protein uS13 family. As to quaternary structure, part of the 30S ribosomal subunit. Forms a loose heterodimer with protein S19. Forms two bridges to the 50S subunit in the 70S ribosome.

Its function is as follows. Located at the top of the head of the 30S subunit, it contacts several helices of the 16S rRNA. In the 70S ribosome it contacts the 23S rRNA (bridge B1a) and protein L5 of the 50S subunit (bridge B1b), connecting the 2 subunits; these bridges are implicated in subunit movement. Contacts the tRNAs in the A and P-sites. The chain is Small ribosomal subunit protein uS13 from Saccharopolyspora erythraea (strain ATCC 11635 / DSM 40517 / JCM 4748 / NBRC 13426 / NCIMB 8594 / NRRL 2338).